An 883-amino-acid polypeptide reads, in one-letter code: Phosphoenolpyruvate carboxylase (883 aa).

Catalysis depends on residues His141 and Lys547.

Belongs to the PEPCase type 1 family. Mg(2+) serves as cofactor.

The catalysed reaction is oxaloacetate + phosphate = phosphoenolpyruvate + hydrogencarbonate. Its function is as follows. Forms oxaloacetate, a four-carbon dicarboxylic acid source for the tricarboxylic acid cycle. The sequence is that of Phosphoenolpyruvate carboxylase from Chromohalobacter salexigens (strain ATCC BAA-138 / DSM 3043 / CIP 106854 / NCIMB 13768 / 1H11).